Reading from the N-terminus, the 71-residue chain is Arrestin-D (71 aa).

It belongs to the arrestin family. In terms of tissue distribution, adrenal, cerebral cortex, heart, liver, lung, pituitary and testis.

This chain is Arrestin-D (Dar), found in Rattus norvegicus (Rat).